An 89-amino-acid chain; its full sequence is Elongation factor 1-beta (89 aa).

This sequence belongs to the EF-1-beta/EF-1-delta family.

Promotes the exchange of GDP for GTP in EF-1-alpha/GDP, thus allowing the regeneration of EF-1-alpha/GTP that could then be used to form the ternary complex EF-1-alpha/GTP/AAtRNA. This chain is Elongation factor 1-beta, found in Methanococcus vannielii (strain ATCC 35089 / DSM 1224 / JCM 13029 / OCM 148 / SB).